Reading from the N-terminus, the 412-residue chain is Transcription factor IIIA (412 aa).

The C2H2-type 1; degenerate zinc-finger motif lies at 20 to 43 (YLCQYCGISRSKNYLITKHIQSHH). 3 consecutive C2H2-type zinc fingers follow at residues 66 to 88 (HTCQ…MQSH), 94 to 118 (FTCY…LLTH), and 123 to 148 (FKCP…KKYH). Residues 144 to 207 (VKKYHSNDNR…NGNGDSQPAE (64 aa)) are disordered. A compositionally biased stretch (basic and acidic residues) spans 148–188 (HSNDNRDKDNTGLGDGDKDNTCKGDDDKEKSGSGGCEKENE). A Glycyl lysine isopeptide (Lys-Gly) (interchain with G-Cter in ubiquitin) cross-link involves residue K185. The C2H2-type 5 zinc-finger motif lies at 215-239 (VVCKEIGCGKAFKYPSQLQKHQDSH). The C2H2-type 6; degenerate zinc-finger motif lies at 247–272 (AFCSEPGCMKYFTNEECLKSHIRSCH). The C2H2-type 7; degenerate zinc-finger motif lies at 275 to 296 (INCEICGSKHLKKNIKRHLRTH). Residues 305 to 330 (IKCEVEGCSSTFSKASNLQKHMKAVH) form a C2H2-type 8 zinc finger. Residues 336–362 (FVCGFPGCGMRFAYKHVRNKHENSGYH) form a C2H2-type 9; degenerate zinc finger. The short motif at 384–391 (LKRKQVTA) is the Nuclear localization signal element.

Post-translationally, protein product TFIIIA (44 kDa) is proteolytically cleaved into TFIIIA-C (34 kDa). Expressed in seedlings, flowers, siliques and seeds.

The protein resides in the nucleus. The protein localises to the nucleolus. Essential protein. Isoform 1 is a transcription activator the binds both 5S rDNA and 5S rRNA and stimulates the transcription of 5S rRNA gene. Isoform 1 regulates 5S rRNA levels during development. This chain is Transcription factor IIIA, found in Arabidopsis thaliana (Mouse-ear cress).